The chain runs to 199 residues: Superoxide dismutase [Mn] (199 aa).

The Mn(2+) site is built by His-27, His-76, Asp-160, and His-164.

It belongs to the iron/manganese superoxide dismutase family. Mn(2+) is required as a cofactor.

The catalysed reaction is 2 superoxide + 2 H(+) = H2O2 + O2. Its function is as follows. Destroys superoxide anion radicals which are normally produced within the cells and which are toxic to biological systems. In Corynebacterium diphtheriae (strain ATCC 700971 / NCTC 13129 / Biotype gravis), this protein is Superoxide dismutase [Mn] (sodA).